Consider the following 688-residue polypeptide: Methionine--tRNA ligase (688 aa).

The 'HIGH' region signature appears at Pro13–His23. Zn(2+) contacts are provided by Cys144, Cys147, Cys157, and Cys160. The 'KMSKS' region signature appears at Lys342 to Ser346. Residue Lys345 participates in ATP binding. The tRNA-binding domain maps to Asp582 to His688.

It belongs to the class-I aminoacyl-tRNA synthetase family. MetG type 1 subfamily. Homodimer. The cofactor is Zn(2+).

The protein resides in the cytoplasm. It catalyses the reaction tRNA(Met) + L-methionine + ATP = L-methionyl-tRNA(Met) + AMP + diphosphate. In terms of biological role, is required not only for elongation of protein synthesis but also for the initiation of all mRNA translation through initiator tRNA(fMet) aminoacylation. The polypeptide is Methionine--tRNA ligase (Acidovorax ebreus (strain TPSY) (Diaphorobacter sp. (strain TPSY))).